The primary structure comprises 105 residues: Iron-sulfur cluster assembly protein CyaY (105 aa).

This sequence belongs to the frataxin family.

Involved in iron-sulfur (Fe-S) cluster assembly. May act as a regulator of Fe-S biogenesis. The sequence is that of Iron-sulfur cluster assembly protein CyaY from Chromobacterium violaceum (strain ATCC 12472 / DSM 30191 / JCM 1249 / CCUG 213 / NBRC 12614 / NCIMB 9131 / NCTC 9757 / MK).